The chain runs to 326 residues: Sucrose operon repressor (326 aa).

Residues 1–57 form the HTH lacI-type domain; the sequence is MKPKLNDVAKLAGVSATTVSRVINNHGYLSSQTKEKVFAAMRELHYQPNNMARSLQG. Positions 5–24 form a DNA-binding region, H-T-H motif; the sequence is LNDVAKLAGVSATTVSRVIN.

Negative regulator of scrB expression. This Pediococcus pentosaceus protein is Sucrose operon repressor (scrR).